A 581-amino-acid chain; its full sequence is Cytosolic Fe-S cluster assembly factor nar-1 (581 aa).

Cys20, Cys68, Cys71, Cys74, Cys215, Cys270, Cys457, and Cys461 together coordinate [4Fe-4S] cluster.

Belongs to the NARF family.

Component of the cytosolic Fe/S protein assembly machinery. Required for maturation of extramitochondrial Fe/S proteins. May play a role in the transfer of pre-assembled Fe/S clusters to target apoproteins. The sequence is that of Cytosolic Fe-S cluster assembly factor nar-1 (nar-1) from Neurospora crassa (strain ATCC 24698 / 74-OR23-1A / CBS 708.71 / DSM 1257 / FGSC 987).